Reading from the N-terminus, the 450-residue chain is 23S rRNA (uracil(1939)-C(5))-methyltransferase RlmD (450 aa).

A TRAM domain is found at 12-70 (SKQLSAKLSLNVDQLDHLGAGIAQYQGKVVFIPGALPDETVTVQLTEQKKNYARAKLIK). Cys-83, Cys-89, Cys-92, and Cys-171 together coordinate [4Fe-4S] cluster. Positions 283, 312, 317, 333, 360, and 380 each coordinate S-adenosyl-L-methionine. The active-site Nucleophile is the Cys-406.

The protein belongs to the class I-like SAM-binding methyltransferase superfamily. RNA M5U methyltransferase family. RlmD subfamily.

The catalysed reaction is uridine(1939) in 23S rRNA + S-adenosyl-L-methionine = 5-methyluridine(1939) in 23S rRNA + S-adenosyl-L-homocysteine + H(+). Catalyzes the formation of 5-methyl-uridine at position 1939 (m5U1939) in 23S rRNA. The protein is 23S rRNA (uracil(1939)-C(5))-methyltransferase RlmD of Shewanella sp. (strain W3-18-1).